Reading from the N-terminus, the 292-residue chain is Bifunctional protein FolD (292 aa).

NADP(+) contacts are provided by residues 166–168 (GRS), Ser191, and Ile232.

This sequence belongs to the tetrahydrofolate dehydrogenase/cyclohydrolase family. As to quaternary structure, homodimer.

The enzyme catalyses (6R)-5,10-methylene-5,6,7,8-tetrahydrofolate + NADP(+) = (6R)-5,10-methenyltetrahydrofolate + NADPH. The catalysed reaction is (6R)-5,10-methenyltetrahydrofolate + H2O = (6R)-10-formyltetrahydrofolate + H(+). The protein operates within one-carbon metabolism; tetrahydrofolate interconversion. Functionally, catalyzes the oxidation of 5,10-methylenetetrahydrofolate to 5,10-methenyltetrahydrofolate and then the hydrolysis of 5,10-methenyltetrahydrofolate to 10-formyltetrahydrofolate. In Wolbachia sp. subsp. Drosophila simulans (strain wRi), this protein is Bifunctional protein FolD.